Here is a 208-residue protein sequence, read N- to C-terminus: Methyl-CpG-binding domain protein 3-like 3 (208 aa).

It belongs to the MBD3L family.

In Homo sapiens (Human), this protein is Methyl-CpG-binding domain protein 3-like 3 (MBD3L3).